Here is a 520-residue protein sequence, read N- to C-terminus: Probable cytosol aminopeptidase (520 aa).

Residues Lys232 and Asp237 each contribute to the Mn(2+) site. Lys244 is an active-site residue. Mn(2+) is bound by residues Asp255, Asp314, and Glu316. Arg318 is an active-site residue. The tract at residues 488–520 (KAKKSTAKKATTKKTTTRKTASKTKSTKSKARK) is disordered.

It belongs to the peptidase M17 family. The cofactor is Mn(2+).

The protein localises to the cytoplasm. It catalyses the reaction Release of an N-terminal amino acid, Xaa-|-Yaa-, in which Xaa is preferably Leu, but may be other amino acids including Pro although not Arg or Lys, and Yaa may be Pro. Amino acid amides and methyl esters are also readily hydrolyzed, but rates on arylamides are exceedingly low.. It carries out the reaction Release of an N-terminal amino acid, preferentially leucine, but not glutamic or aspartic acids.. In terms of biological role, presumably involved in the processing and regular turnover of intracellular proteins. Catalyzes the removal of unsubstituted N-terminal amino acids from various peptides. This chain is Probable cytosol aminopeptidase (pepA), found in Metamycoplasma salivarium (Mycoplasma salivarium).